A 305-amino-acid polypeptide reads, in one-letter code: HTH-type transcriptional activator BauR (305 aa).

Residues 15–72 (FDIRLLRIFKTIVECGSFSAAESTLGLSRSAISLHMGDLEKRLGMRLCQRGRAGFALT) form the HTH lysR-type domain.

The protein belongs to the LysR transcriptional regulatory family.

Functionally, involved in the degradation of beta-alanine. BauR activates the transcription of the bauABCD operon. In Pseudomonas aeruginosa (strain ATCC 15692 / DSM 22644 / CIP 104116 / JCM 14847 / LMG 12228 / 1C / PRS 101 / PAO1), this protein is HTH-type transcriptional activator BauR (bauR).